A 615-amino-acid polypeptide reads, in one-letter code: Medium-chain acyl-CoA ligase ACSF2, mitochondrial (615 aa).

The transit peptide at 1-41 (MAVYVGMLRLGRLCAGSSGVLGARAALSRSWQEARLQGVRF) directs the protein to the mitochondrion. N6-acetyllysine is present on K179. K182 is subject to N6-acetyllysine; alternate. K182 carries the post-translational modification N6-succinyllysine; alternate. 263-271 (TSGTTGSPK) contributes to the ATP binding site. K340 and K398 each carry N6-acetyllysine. K478 is modified (N6-succinyllysine). Positions 493 and 508 each coordinate ATP. N6-acetyllysine is present on K510. Residues K544 and K570 each carry the N6-acetyllysine; alternate modification. N6-succinyllysine; alternate is present on residues K544 and K570. K599 contributes to the ATP binding site. K599 carries the post-translational modification N6-succinyllysine.

This sequence belongs to the ATP-dependent AMP-binding enzyme family.

It is found in the mitochondrion. The enzyme catalyses a medium-chain fatty acid + ATP + CoA = a medium-chain fatty acyl-CoA + AMP + diphosphate. It catalyses the reaction octanoate + ATP + CoA = octanoyl-CoA + AMP + diphosphate. Acyl-CoA synthases catalyze the initial reaction in fatty acid metabolism, by forming a thioester with CoA. Has some preference toward medium-chain substrates. Plays a role in adipocyte differentiation. The chain is Medium-chain acyl-CoA ligase ACSF2, mitochondrial from Homo sapiens (Human).